A 473-amino-acid chain; its full sequence is Argininosuccinate lyase (473 aa).

The 2-(N(omega)-L-arginino)succinate site is built by Ser34, Asn121, and Thr166. The Proton acceptor role is filled by His167. Ser289 (proton donor) is an active-site residue. 3 residues coordinate 2-(N(omega)-L-arginino)succinate: Asn297, Tyr329, and Gln334.

This sequence belongs to the lyase 1 family. Argininosuccinate lyase subfamily.

It catalyses the reaction 2-(N(omega)-L-arginino)succinate = fumarate + L-arginine. It functions in the pathway amino-acid biosynthesis; L-arginine biosynthesis; L-arginine from L-ornithine and carbamoyl phosphate: step 3/3. The polypeptide is Argininosuccinate lyase (ARG7) (Chlamydomonas reinhardtii (Chlamydomonas smithii)).